Here is a 158-residue protein sequence, read N- to C-terminus: 6,7-dimethyl-8-ribityllumazine synthase (158 aa).

5-amino-6-(D-ribitylamino)uracil contacts are provided by residues phenylalanine 22, 57–59 (AYE), and 81–83 (AVI). 86-87 (GT) provides a ligand contact to (2S)-2-hydroxy-3-oxobutyl phosphate. The active-site Proton donor is the histidine 89. Phenylalanine 114 contacts 5-amino-6-(D-ribitylamino)uracil. Arginine 128 lines the (2S)-2-hydroxy-3-oxobutyl phosphate pocket.

It belongs to the DMRL synthase family. Forms an icosahedral capsid composed of 60 subunits, arranged as a dodecamer of pentamers.

It catalyses the reaction (2S)-2-hydroxy-3-oxobutyl phosphate + 5-amino-6-(D-ribitylamino)uracil = 6,7-dimethyl-8-(1-D-ribityl)lumazine + phosphate + 2 H2O + H(+). Its pathway is cofactor biosynthesis; riboflavin biosynthesis; riboflavin from 2-hydroxy-3-oxobutyl phosphate and 5-amino-6-(D-ribitylamino)uracil: step 1/2. Catalyzes the formation of 6,7-dimethyl-8-ribityllumazine by condensation of 5-amino-6-(D-ribitylamino)uracil with 3,4-dihydroxy-2-butanone 4-phosphate. This is the penultimate step in the biosynthesis of riboflavin. The sequence is that of 6,7-dimethyl-8-ribityllumazine synthase from Pseudoalteromonas atlantica (strain T6c / ATCC BAA-1087).